Consider the following 300-residue polypeptide: MTQEGKLEQQFLNYLHSERNYSVNTSTAYENDILDFRRFLNEQAISEYQQVTFLDVRIYLTELKQKSFSRTTVARKISSLRSFYTFLLRENVISENPFTYVSHAKNQLRLPKFFYSEEMEALFQVVYEDNETLTLRDRVLLEVLYGTGIRVSECAGILLSDLDTSYQAILIRGKGNKERYVPFGAYAEDAITDYLSSRTELMIRFKKEHDSLLINHYGDPLTTRGIRYCLTKIISKASLTRKIHPHMLRHTFATDLLNNGADMRTVQELLGHASLSSTQIYTHVTKEHLKSTYMKHHPRA.

Positions 2 to 88 (TQEGKLEQQF…SLRSFYTFLL (87 aa)) constitute a Core-binding (CB) domain. The 186-residue stretch at 109–294 (RLPKFFYSEE…TKEHLKSTYM (186 aa)) folds into the Tyr recombinase domain. Active-site residues include arginine 150, lysine 174, histidine 246, arginine 249, and histidine 272. Catalysis depends on tyrosine 281, which acts as the O-(3'-phospho-DNA)-tyrosine intermediate.

It belongs to the 'phage' integrase family. XerC subfamily. As to quaternary structure, forms a cyclic heterotetrameric complex composed of two molecules of XerC and two molecules of XerD.

Its subcellular location is the cytoplasm. Site-specific tyrosine recombinase, which acts by catalyzing the cutting and rejoining of the recombining DNA molecules. The XerC-XerD complex is essential to convert dimers of the bacterial chromosome into monomers to permit their segregation at cell division. It also contributes to the segregational stability of plasmids. This Listeria welshimeri serovar 6b (strain ATCC 35897 / DSM 20650 / CCUG 15529 / CIP 8149 / NCTC 11857 / SLCC 5334 / V8) protein is Tyrosine recombinase XerC.